The sequence spans 328 residues: Alanine racemase (328 aa).

Lysine 33 serves as the catalytic Proton acceptor; specific for D-alanine. An N6-(pyridoxal phosphate)lysine modification is found at lysine 33. Arginine 118 contributes to the substrate binding site. The active-site Proton acceptor; specific for L-alanine is tyrosine 237. Substrate is bound at residue methionine 283.

It belongs to the alanine racemase family. The cofactor is pyridoxal 5'-phosphate.

It carries out the reaction L-alanine = D-alanine. It functions in the pathway amino-acid biosynthesis; D-alanine biosynthesis; D-alanine from L-alanine: step 1/1. Functionally, catalyzes the interconversion of L-alanine and D-alanine. May also act on other amino acids. This is Alanine racemase (alr) from Campylobacter jejuni subsp. jejuni serotype O:23/36 (strain 81-176).